A 397-amino-acid chain; its full sequence is Tryptophan synthase beta chain 1 (397 aa).

Residue Lys-90 is modified to N6-(pyridoxal phosphate)lysine.

Belongs to the TrpB family. Tetramer of two alpha and two beta chains. The cofactor is pyridoxal 5'-phosphate.

It carries out the reaction (1S,2R)-1-C-(indol-3-yl)glycerol 3-phosphate + L-serine = D-glyceraldehyde 3-phosphate + L-tryptophan + H2O. It participates in amino-acid biosynthesis; L-tryptophan biosynthesis; L-tryptophan from chorismate: step 5/5. In terms of biological role, the beta subunit is responsible for the synthesis of L-tryptophan from indole and L-serine. This Aquifex aeolicus (strain VF5) protein is Tryptophan synthase beta chain 1 (trpB1).